Here is a 78-residue protein sequence, read N- to C-terminus: D-alanyl carrier protein (78 aa).

In terms of domain architecture, Carrier spans 1-78; it reads MEFRDQVLDL…KIVAVLEELR (78 aa). O-(pantetheine 4'-phosphoryl)serine is present on Ser-36.

The protein belongs to the DltC family. In terms of processing, 4'-phosphopantetheine is transferred from CoA to a specific serine of apo-DCP.

It is found in the cytoplasm. The protein operates within cell wall biogenesis; lipoteichoic acid biosynthesis. Carrier protein involved in the D-alanylation of lipoteichoic acid (LTA). The loading of thioester-linked D-alanine onto DltC is catalyzed by D-alanine--D-alanyl carrier protein ligase DltA. The DltC-carried D-alanyl group is further transferred to cell membrane phosphatidylglycerol (PG) by forming an ester bond, probably catalyzed by DltD. D-alanylation of LTA plays an important role in modulating the properties of the cell wall in Gram-positive bacteria, influencing the net charge of the cell wall. The protein is D-alanyl carrier protein of Staphylococcus saprophyticus subsp. saprophyticus (strain ATCC 15305 / DSM 20229 / NCIMB 8711 / NCTC 7292 / S-41).